The chain runs to 302 residues: uncharacterized protein (302 aa).

N-linked (GlcNAc...) asparagine glycans are attached at residues Asn32, Asn39, and Asn94. The 36-residue stretch at 80 to 115 folds into the ShKT domain; that stretch reads CRDTDMNCAVWVATNTSDCENVELVNSHCPRTCQTC. Cystine bridges form between Cys80/Cys115, Cys87/Cys108, and Cys98/Cys112. N-linked (GlcNAc...) asparagine glycosylation occurs at Asn181.

This is an uncharacterized protein from Caenorhabditis elegans.